A 385-amino-acid chain; its full sequence is Tuliposide A-converting enzyme 1, chloroplastic (385 aa).

The N-terminal 77 residues, 1 to 77 (MSVASFFSSL…PSPSLSPTPT (77 aa)), are a transit peptide targeting the chloroplast. S235 (acyl-ester intermediate) is an active-site residue. Residues D327 and H359 each act as charge relay system in the active site.

Belongs to the AB hydrolase superfamily. In terms of assembly, homodimer. In terms of tissue distribution, expressed in roots, stems, leaves, petals, stamens and pistils, but not in bulb scales.

The protein localises to the plastid. Its subcellular location is the chloroplast. It catalyses the reaction 6-tuliposide A = tulipalin A + D-glucose. Its activity is regulated as follows. Inhibited by NaF, AgNO(3), HgCl(2), CuSO(4) and phenylmethylsulfonyl fluoride (PMSF). In terms of biological role, lactone-forming carboxylesterases, specifically catalyzing intramolecular transesterification, but not hydrolysis. Involved in the biosynthesis of tulipalins, defensive chemicals that show antimicrobial activities against a broad range of strains of bacteria and fungi. Substrates are 6-tuliposide A &gt; 6-tuliposide B. This Tulipa gesneriana (Garden tulip) protein is Tuliposide A-converting enzyme 1, chloroplastic (TCEA1).